A 125-amino-acid polypeptide reads, in one-letter code: Small ribosomal subunit protein uS13 (125 aa).

The protein belongs to the universal ribosomal protein uS13 family. In terms of assembly, part of the 30S ribosomal subunit. Forms a loose heterodimer with protein S19. Forms two bridges to the 50S subunit in the 70S ribosome.

Located at the top of the head of the 30S subunit, it contacts several helices of the 16S rRNA. In the 70S ribosome it contacts the 23S rRNA (bridge B1a) and protein L5 of the 50S subunit (bridge B1b), connecting the 2 subunits; these bridges are implicated in subunit movement. Contacts the tRNAs in the A and P-sites. The chain is Small ribosomal subunit protein uS13 from Granulibacter bethesdensis (strain ATCC BAA-1260 / CGDNIH1).